Consider the following 156-residue polypeptide: N-glycosidase Npun_R5314 (156 aa).

Belongs to the YbiA family.

The catalysed reaction is 2,5-diamino-6-hydroxy-4-(5-phosphoribosylamino)-pyrimidine + H2O = 2,5,6-triamino-4-hydroxypyrimidine + D-ribose 5-phosphate. The enzyme catalyses 5-amino-6-(5-phospho-D-ribosylamino)uracil + H2O = 5,6-diaminouracil + D-ribose 5-phosphate. In terms of biological role, catalyzes the hydrolysis of the N-glycosidic bond in the first two intermediates of riboflavin biosynthesis, which are highly reactive metabolites, yielding relatively innocuous products. Thus, can divert a surplus of harmful intermediates into relatively harmless products and pre-empt the damage these intermediates would otherwise do. May act on other substrates in vivo. Has no activity against GTP, nucleoside monophosphates or ADP-ribose. The polypeptide is N-glycosidase Npun_R5314 (Nostoc punctiforme (strain ATCC 29133 / PCC 73102)).